The primary structure comprises 263 residues: Type II restriction enzyme TaqI (263 aa).

Only 15% of purified enzyme (upon expression in E.coli) can be sequenced, suggesting the remainder has a blocked N-terminus.

It catalyses the reaction Endonucleolytic cleavage of DNA to give specific double-stranded fragments with terminal 5'-phosphates.. Functionally, a P subtype restriction enzyme that recognizes the double-stranded sequence 5'-TCGA-3' and cleaves after T-1. This is Type II restriction enzyme TaqI (taqIR) from Thermus aquaticus.